Here is a 372-residue protein sequence, read N- to C-terminus: Glutamate 5-kinase (372 aa).

Lys-14 serves as a coordination point for ATP. Substrate-binding residues include Ser-54, Asp-141, and Asn-153. Residues 173 to 174 (TD) and 215 to 221 (TGGMITK) each bind ATP. The 79-residue stretch at 280–358 (AGRLLLDDGA…REIEAALGYI (79 aa)) folds into the PUA domain.

It belongs to the glutamate 5-kinase family.

The protein localises to the cytoplasm. The catalysed reaction is L-glutamate + ATP = L-glutamyl 5-phosphate + ADP. Its pathway is amino-acid biosynthesis; L-proline biosynthesis; L-glutamate 5-semialdehyde from L-glutamate: step 1/2. Catalyzes the transfer of a phosphate group to glutamate to form L-glutamate 5-phosphate. The sequence is that of Glutamate 5-kinase from Chromobacterium violaceum (strain ATCC 12472 / DSM 30191 / JCM 1249 / CCUG 213 / NBRC 12614 / NCIMB 9131 / NCTC 9757 / MK).